Here is an 87-residue protein sequence, read N- to C-terminus: MKFYLVLAFLTLCAVAVTALPAGDETRIDLETLEEDLRLVDGAQVTGELKRDKRVTCNIGEWVCVAHCNSKSKKSGYCSRGVCYCTN.

An N-terminal signal peptide occupies residues Met-1–Ala-19. Positions Leu-20–Gln-44 are excised as a propeptide. 3 cysteine pairs are disulfide-bonded: Cys-57–Cys-78, Cys-64–Cys-83, and Cys-68–Cys-85.

As to expression, hemolymph and fat body.

It localises to the secreted. Antibacterial peptide mostly active against Gram-positive and Gram negative bacteria. The protein is Defensin-A of Glossina morsitans morsitans (Savannah tsetse fly).